Consider the following 734-residue polypeptide: Sulfate transporter (734 aa).

Residues 1 to 11 (MSLKNGEQNDL) show a composition bias toward polar residues. Residues 1–38 (MSLKNGEQNDLSPKDSVKGNDQYRSPSGIHVEHEEESR) are disordered. Phosphoserine is present on residues Ser-12 and Ser-16. The next 2 helical transmembrane spans lie at 113–133 (MMSGLIVGILLVPQSIAYSLL) and 138–158 (PIYGLYTSFFASLIYFILGTS). N-linked (GlcNAc...) asparagine glycosylation is found at Asn-194 and Asn-204. 8 helical membrane-spanning segments follow: residues 222–242 (FVAGVYQVAMGFFQVGFVSVY), 247–267 (LLGGFVTGASFTILTSQVKYL), 269–289 (GLSLPRSGGVGSLITTWIHIF), 292–312 (IHKTNICDLITSLLCLLVLLP), 379–399 (VDAIAIAIIGFAITVSLSEMF), 415–435 (AIGFCNIIPSFFHSFTTSAAL), 453–473 (VMTALVLLLVLLVIAPLFFSL), and 519–539 (LISTEIGLLTGVCFSMFCVIL). In terms of domain architecture, STAS spans 563-714 (AYKNLQAKSG…YSVYEAMTFA (152 aa)).

This sequence belongs to the SLC26A/SulP transporter (TC 2.A.53) family. In terms of processing, N-glycosylated.

It localises to the cell membrane. The protein localises to the apical cell membrane. The catalysed reaction is oxalate(in) + sulfate(out) = oxalate(out) + sulfate(in). The enzyme catalyses sulfate(out) + 2 chloride(in) = sulfate(in) + 2 chloride(out). It carries out the reaction oxalate(out) + 2 chloride(in) = oxalate(in) + 2 chloride(out). It catalyses the reaction bromide(in) + chloride(out) = bromide(out) + chloride(in). The catalysed reaction is nitrate(in) + chloride(out) = nitrate(out) + chloride(in). The enzyme catalyses iodide(in) + chloride(out) = iodide(out) + chloride(in). In terms of biological role, sulfate transporter which mediates sulfate uptake into chondrocytes in order to maintain adequate sulfation of proteoglycans which is needed for cartilage development. Mediates electroneutral anion exchange of sulfate ions for oxalate ions, sulfate and oxalate ions for chloride and/or hydroxyl ions and chloride ions for bromide, iodide and nitrate ions. The coupling of sulfate transport to both hydroxyl and chloride ions likely serves to ensure transport at both acidic pH when most sulfate uptake is mediated by sulfate-hydroxide exchange and alkaline pH when most sulfate uptake is mediated by sulfate-chloride exchange. Essential for chondrocyte proliferation, differentiation and cell size expansion. This is Sulfate transporter (SLC26A2) from Ovis aries (Sheep).